The primary structure comprises 427 residues: Lipophilic envelope-spanning tunnel protein A (427 aa).

Over methionine 1–threonine 75 the chain is Cytoplasmic. The helical transmembrane segment at methionine 76 to isoleucine 96 threads the bilayer. The Periplasmic portion of the chain corresponds to arginine 97–methionine 120. A helical membrane pass occupies residues valine 121–phenylalanine 141. The Cytoplasmic segment spans residues glycine 142–alanine 269. A helical transmembrane segment spans residues leucine 270–leucine 290. Residues asparagine 291–asparagine 310 are Periplasmic-facing. A helical transmembrane segment spans residues isoleucine 311 to valine 331. The Cytoplasmic portion of the chain corresponds to methionine 332–arginine 350. The helical transmembrane segment at isoleucine 351–isoleucine 371 threads the bilayer. Residues serine 372–glutamine 382 are Periplasmic-facing. Residues isoleucine 383 to isoleucine 403 form a helical membrane-spanning segment. Residues leucine 404–aspartate 427 lie on the Cytoplasmic side of the membrane.

The protein belongs to the PqiA family. In terms of assembly, may interact with LetB in the inner membrane.

The protein resides in the cell inner membrane. Could be part, together with LetB, of a system that transports lipids between the inner membrane and the outer membrane. Contributes to membrane integrity. The chain is Lipophilic envelope-spanning tunnel protein A from Escherichia coli (strain K12).